The chain runs to 125 residues: MVAALLSHPTKVPQTPVPAAFPDTSKNPIEIDTNTIKLLERLSLVDLDSDQALDTLKSSIQFADKIANINTDNVQPLYTVLEHQQLQLRNDQVTAGNCREELLRCAKRTDEDYYVSPPGNIPLEQ.

It belongs to the GatC family. As to quaternary structure, subunit of the heterotrimeric GatCAB amidotransferase (AdT) complex, composed of A, B and C subunits.

The protein localises to the mitochondrion. It catalyses the reaction L-glutamyl-tRNA(Gln) + L-glutamine + ATP + H2O = L-glutaminyl-tRNA(Gln) + L-glutamate + ADP + phosphate + H(+). In terms of biological role, allows the formation of correctly charged Gln-tRNA(Gln) through the transamidation of misacylated Glu-tRNA(Gln) in the mitochondria. The reaction takes place in the presence of glutamine and ATP through an activated gamma-phospho-Glu-tRNA(Gln). This Drosophila mojavensis (Fruit fly) protein is Glutamyl-tRNA(Gln) amidotransferase subunit C, mitochondrial.